A 179-amino-acid chain; its full sequence is UPF0200 protein TV0279 (179 aa).

6-13 is an ATP binding site; it reads GMPGAGKD.

This sequence belongs to the UPF0200 family.

This Thermoplasma volcanium (strain ATCC 51530 / DSM 4299 / JCM 9571 / NBRC 15438 / GSS1) protein is UPF0200 protein TV0279.